Reading from the N-terminus, the 355-residue chain is UDP-N-acetylglucosamine--N-acetylmuramyl-(pentapeptide) pyrophosphoryl-undecaprenol N-acetylglucosamine transferase (355 aa).

Residues 12-14, Asn-124, Arg-160, Ser-192, Ile-243, 262-267, and Gln-287 each bind UDP-N-acetyl-alpha-D-glucosamine; these read TGG and ALTVCE.

It belongs to the glycosyltransferase 28 family. MurG subfamily.

It localises to the cell inner membrane. The enzyme catalyses di-trans,octa-cis-undecaprenyl diphospho-N-acetyl-alpha-D-muramoyl-L-alanyl-D-glutamyl-meso-2,6-diaminopimeloyl-D-alanyl-D-alanine + UDP-N-acetyl-alpha-D-glucosamine = di-trans,octa-cis-undecaprenyl diphospho-[N-acetyl-alpha-D-glucosaminyl-(1-&gt;4)]-N-acetyl-alpha-D-muramoyl-L-alanyl-D-glutamyl-meso-2,6-diaminopimeloyl-D-alanyl-D-alanine + UDP + H(+). It functions in the pathway cell wall biogenesis; peptidoglycan biosynthesis. Cell wall formation. Catalyzes the transfer of a GlcNAc subunit on undecaprenyl-pyrophosphoryl-MurNAc-pentapeptide (lipid intermediate I) to form undecaprenyl-pyrophosphoryl-MurNAc-(pentapeptide)GlcNAc (lipid intermediate II). This Haemophilus ducreyi (strain 35000HP / ATCC 700724) protein is UDP-N-acetylglucosamine--N-acetylmuramyl-(pentapeptide) pyrophosphoryl-undecaprenol N-acetylglucosamine transferase.